We begin with the raw amino-acid sequence, 715 residues long: Serine/arginine repetitive matrix protein 5 (715 aa).

Residues 1–13 (MSSPKRSSKPSMS) show a composition bias toward low complexity. The tract at residues 1-715 (MSSPKRSSKP…RSSSSSSKLA (715 aa)) is disordered. Polar residues predominate over residues 32-59 (LKSTKSATPNRSLVPTKPATSRNSVMSP). Residues 60 to 79 (SSSKSTKSTSTKRAPSNRPS) are compositionally biased toward low complexity. Residues 80–90 (SRSRVRSKART) are compositionally biased toward basic residues. Over residues 92-104 (SRVSTDTRTSKAS) the composition is skewed to polar residues. The span at 112-136 (HQRRGTHSRGRTPGRRGSRSSKRSP) shows a compositional bias: basic residues. Polar residues-rich tracts occupy residues 213-224 (TPSTAKCQTPTG) and 257-272 (YSPT…YNQA). Residues 273–285 (STRSRPQSHSQSR) show a composition bias toward low complexity. Positions 286–320 (SPRRSRSGSQKRTHSRVRSHSWKRNHSRARSRTRK) are enriched in basic residues. 2 stretches are compositionally biased toward basic and acidic residues: residues 359 to 388 (PSKE…KESG) and 397 to 521 (KQRD…ERDH). Residues 522–536 (RRSRSPSKERQRRQS) are compositionally biased toward basic residues. Composition is skewed to basic and acidic residues over residues 539–595 (PNKE…DHSR) and 611–628 (SSKE…KEGN). Residues 657–666 (TRTSSLSQNR) show a composition bias toward polar residues. A compositionally biased stretch (low complexity) spans 667–681 (TPSKTSSHSPSTFPS). The span at 682-715 (GGQTLSQDDSQADATTSKATLPGERSSSSSSKLA) shows a compositional bias: polar residues.

The protein is Serine/arginine repetitive matrix protein 5 (SRRM5) of Homo sapiens (Human).